Here is a 337-residue protein sequence, read N- to C-terminus: Holliday junction branch migration complex subunit RuvB (337 aa).

The large ATPase domain (RuvB-L) stretch occupies residues 1–179 (MTHQVAVLHQ…FAFSARLSYY (179 aa)). ATP is bound by residues L18, R19, G60, K63, T64, S65, 126-128 (EDF), R169, Y179, and R216. A Mg(2+)-binding site is contributed by T64. Positions 180-250 (SDQDLKEILV…VAEKALAMLL (71 aa)) are small ATPAse domain (RuvB-S). The segment at 253-337 (DWGLNEIDIK…KNLLSLGEGQ (85 aa)) is head domain (RuvB-H). K308 and R313 together coordinate DNA.

This sequence belongs to the RuvB family. In terms of assembly, homohexamer. Forms an RuvA(8)-RuvB(12)-Holliday junction (HJ) complex. HJ DNA is sandwiched between 2 RuvA tetramers; dsDNA enters through RuvA and exits via RuvB. An RuvB hexamer assembles on each DNA strand where it exits the tetramer. Each RuvB hexamer is contacted by two RuvA subunits (via domain III) on 2 adjacent RuvB subunits; this complex drives branch migration. In the full resolvosome a probable DNA-RuvA(4)-RuvB(12)-RuvC(2) complex forms which resolves the HJ.

The protein resides in the cytoplasm. The catalysed reaction is ATP + H2O = ADP + phosphate + H(+). In terms of biological role, the RuvA-RuvB-RuvC complex processes Holliday junction (HJ) DNA during genetic recombination and DNA repair, while the RuvA-RuvB complex plays an important role in the rescue of blocked DNA replication forks via replication fork reversal (RFR). RuvA specifically binds to HJ cruciform DNA, conferring on it an open structure. The RuvB hexamer acts as an ATP-dependent pump, pulling dsDNA into and through the RuvAB complex. RuvB forms 2 homohexamers on either side of HJ DNA bound by 1 or 2 RuvA tetramers; 4 subunits per hexamer contact DNA at a time. Coordinated motions by a converter formed by DNA-disengaged RuvB subunits stimulates ATP hydrolysis and nucleotide exchange. Immobilization of the converter enables RuvB to convert the ATP-contained energy into a lever motion, pulling 2 nucleotides of DNA out of the RuvA tetramer per ATP hydrolyzed, thus driving DNA branch migration. The RuvB motors rotate together with the DNA substrate, which together with the progressing nucleotide cycle form the mechanistic basis for DNA recombination by continuous HJ branch migration. Branch migration allows RuvC to scan DNA until it finds its consensus sequence, where it cleaves and resolves cruciform DNA. The sequence is that of Holliday junction branch migration complex subunit RuvB from Chlamydia pneumoniae (Chlamydophila pneumoniae).